The chain runs to 859 residues: Cleavage factor two protein 2 (859 aa).

The disordered stretch occupies residues Pro-560–Arg-611. Residues Asn-586–Gly-597 are compositionally biased toward acidic residues.

Component of the cleavage and polyadenylation factor (CPF) complex, which is composed of at least PTI1, SYC1, SSU72, GLC7, MPE1, REF2, PFS2, PTA1, YSH1/BRR5, SWD2, CFT2/YDH1, YTH1, CFT1/YHH1, FIP1 and PAP1. Interacts with the CTD domain of RPB1/RNA polymerase II; the interaction is enhanced upon phosphorylation of the RPB1 CTD domain. Interacts with PCF11.

It is found in the nucleus. RNA-binding component of the cleavage and polyadenylation factor (CPF) complex, which plays a key role in polyadenylation-dependent pre-mRNA 3'-end formation and cooperates with cleavage factors including the CFIA complex and NAB4/CFIB. May be involved in poly(A)-site recognition. May be involved in the association of the CPF, CPFIA and RNA polymerase II complexes. In Saccharomyces cerevisiae (strain ATCC 204508 / S288c) (Baker's yeast), this protein is Cleavage factor two protein 2 (CFT2).